An 811-amino-acid polypeptide reads, in one-letter code: DNA gyrase subunit A (811 aa).

A Topo IIA-type catalytic domain is found at 30–493 (LPDVRDGLKP…LEEDIGKEDL (464 aa)). The active-site O-(5'-phospho-DNA)-tyrosine intermediate is the Tyr-118. The short motif at 520–526 (QGRGGRG) is the GyrA-box element.

This sequence belongs to the type II topoisomerase GyrA/ParC subunit family. Heterotetramer, composed of two GyrA and two GyrB chains. In the heterotetramer, GyrA contains the active site tyrosine that forms a transient covalent intermediate with DNA, while GyrB binds cofactors and catalyzes ATP hydrolysis.

Its subcellular location is the cytoplasm. The enzyme catalyses ATP-dependent breakage, passage and rejoining of double-stranded DNA.. In terms of biological role, a type II topoisomerase that negatively supercoils closed circular double-stranded (ds) DNA in an ATP-dependent manner to modulate DNA topology and maintain chromosomes in an underwound state. Negative supercoiling favors strand separation, and DNA replication, transcription, recombination and repair, all of which involve strand separation. Also able to catalyze the interconversion of other topological isomers of dsDNA rings, including catenanes and knotted rings. Type II topoisomerases break and join 2 DNA strands simultaneously in an ATP-dependent manner. The chain is DNA gyrase subunit A from Deinococcus deserti (strain DSM 17065 / CIP 109153 / LMG 22923 / VCD115).